A 65-amino-acid polypeptide reads, in one-letter code: Myosin-11 (65 aa).

The Myosin motor domain occupies 1–65 (RSGKLDAFLV…NWQWWRLFTK (65 aa)).

The protein belongs to the TRAFAC class myosin-kinesin ATPase superfamily. Myosin family. Muscle myosin is a hexameric protein that consists of 2 heavy chain subunits (MHC), 2 alkali light chain subunits (MLC) and 2 regulatory light chain subunits (MLC-2).

It is found in the melanosome. It localises to the cytoplasm. Its subcellular location is the myofibril. Functionally, muscle contraction. The sequence is that of Myosin-11 (MYH11) from Sus scrofa (Pig).